The primary structure comprises 500 residues: Cobyric acid synthase (500 aa).

In terms of domain architecture, GATase cobBQ-type spans 255–444 (AIDIAVIRCP…MHDLFHNDAF (190 aa)). The Nucleophile role is filled by Cys-337. The active site involves His-436.

Belongs to the CobB/CobQ family. CobQ subfamily.

It functions in the pathway cofactor biosynthesis; adenosylcobalamin biosynthesis. Catalyzes amidations at positions B, D, E, and G on adenosylcobyrinic A,C-diamide. NH(2) groups are provided by glutamine, and one molecule of ATP is hydrogenolyzed for each amidation. The protein is Cobyric acid synthase of Geobacillus thermodenitrificans (strain NG80-2).